The primary structure comprises 321 residues: Biotin synthase (321 aa).

Positions 45–271 (YYGKKVKLNM…INPTKEIRIA (227 aa)) constitute a Radical SAM core domain. [4Fe-4S] cluster-binding residues include cysteine 63, cysteine 67, and cysteine 70. 4 residues coordinate [2Fe-2S] cluster: cysteine 106, cysteine 139, cysteine 199, and arginine 269.

This sequence belongs to the radical SAM superfamily. Biotin synthase family. In terms of assembly, homodimer. The cofactor is [4Fe-4S] cluster. [2Fe-2S] cluster is required as a cofactor.

It carries out the reaction (4R,5S)-dethiobiotin + (sulfur carrier)-SH + 2 reduced [2Fe-2S]-[ferredoxin] + 2 S-adenosyl-L-methionine = (sulfur carrier)-H + biotin + 2 5'-deoxyadenosine + 2 L-methionine + 2 oxidized [2Fe-2S]-[ferredoxin]. The protein operates within cofactor biosynthesis; biotin biosynthesis; biotin from 7,8-diaminononanoate: step 2/2. Catalyzes the conversion of dethiobiotin (DTB) to biotin by the insertion of a sulfur atom into dethiobiotin via a radical-based mechanism. This is Biotin synthase from Staphylococcus epidermidis (strain ATCC 35984 / DSM 28319 / BCRC 17069 / CCUG 31568 / BM 3577 / RP62A).